The sequence spans 134 residues: Small ribosomal subunit protein uS11 (134 aa).

Belongs to the universal ribosomal protein uS11 family. As to quaternary structure, part of the 30S ribosomal subunit. Interacts with proteins S7 and S18. Binds to IF-3.

Functionally, located on the platform of the 30S subunit, it bridges several disparate RNA helices of the 16S rRNA. Forms part of the Shine-Dalgarno cleft in the 70S ribosome. The chain is Small ribosomal subunit protein uS11 from Corynebacterium diphtheriae (strain ATCC 700971 / NCTC 13129 / Biotype gravis).